We begin with the raw amino-acid sequence, 342 residues long: Protein rough sheath 2 homolog (342 aa).

HTH myb-type domains follow at residues 1-58 (MQPP…KNYL) and 59-113 (RPGI…EKQQ). 2 DNA-binding regions (H-T-H motif) span residues 32–58 (WSLV…KNYL) and 86–109 (WKKI…EVFK). Positions 253–304 (RRREATEEFEAKMRALREEQAAAVERVEAEYREKMAGLRRDAEAKEQKMAEQ) form a coiled coil.

Its subcellular location is the nucleus. In terms of biological role, transcription factor required for normal cell differentiation. May interact with other proteins to repress the knox homeobox genes. The chain is Protein rough sheath 2 homolog (RS2) from Oryza sativa subsp. japonica (Rice).